The chain runs to 334 residues: TPR repeat-containing protein MJ0798 (334 aa).

7 TPR repeats span residues 102–135 (WKLW…NQNT), 137–168 (LLCK…DRNN), 169–202 (YKAL…NPND), 204–235 (EALE…KPDD), 236–269 (IDLI…NPNV), 273–306 (EQIY…NLYH), and 308–333 (EIYE…YKKL).

The polypeptide is TPR repeat-containing protein MJ0798 (Methanocaldococcus jannaschii (strain ATCC 43067 / DSM 2661 / JAL-1 / JCM 10045 / NBRC 100440) (Methanococcus jannaschii)).